Consider the following 97-residue polypeptide: uncharacterized protein (97 aa).

The 94-residue stretch at 2 to 95 (IRHLVLFKLN…EFATWVIADY (94 aa)) folds into the Stress-response A/B barrel domain.

This is an uncharacterized protein from Streptomyces coelicolor (strain ATCC BAA-471 / A3(2) / M145).